We begin with the raw amino-acid sequence, 162 residues long: MELLAPNLRVVFCGINPGLSSAHQGYPFANGSNRFWKVIHQAGFTESQLAPEQWQQLKDNGCGITALVARPTVAASELSRDELRSGGEALQEKILRYQPRALAILGKQAFTTAFGVKNAPWGKQTLTLGETEVWVLPNPSGLNRATLEQLTASYRELFLALQ.

This sequence belongs to the uracil-DNA glycosylase (UDG) superfamily. TDG/mug family. As to quaternary structure, binds DNA as a monomer.

The protein resides in the cytoplasm. The catalysed reaction is Specifically hydrolyzes mismatched double-stranded DNA and polynucleotides, releasing free uracil.. In terms of biological role, excises ethenocytosine and uracil, which can arise by alkylation or deamination of cytosine, respectively, from the corresponding mispairs with guanine in ds-DNA. It is capable of hydrolyzing the carbon-nitrogen bond between the sugar-phosphate backbone of the DNA and the mispaired base. The complementary strand guanine functions in substrate recognition. Required for DNA damage lesion repair in stationary-phase cells. This Serratia marcescens protein is G/U mismatch-specific DNA glycosylase.